Reading from the N-terminus, the 133-residue chain is Large ribosomal subunit protein uL14 (133 aa).

This sequence belongs to the universal ribosomal protein uL14 family. Part of the 50S ribosomal subunit. Forms a cluster with proteins L3 and L19. In the 70S ribosome, L14 and L19 interact and together make contacts with the 16S rRNA in bridges B5 and B8.

In terms of biological role, binds to 23S rRNA. Forms part of two intersubunit bridges in the 70S ribosome. This chain is Large ribosomal subunit protein uL14, found in Gloeobacter violaceus (strain ATCC 29082 / PCC 7421).